A 201-amino-acid chain; its full sequence is Small ribosomal subunit protein uS4c (201 aa).

Residues 20–43 (GLTNKRPKSRNDPTNQSSSRKISQ) are disordered. Residues 31 to 41 (DPTNQSSSRKI) show a composition bias toward polar residues. An S4 RNA-binding domain is found at 89 to 157 (MRLDNIIFRL…IGKNLDLSQK (69 aa)).

This sequence belongs to the universal ribosomal protein uS4 family. As to quaternary structure, part of the 30S ribosomal subunit. Contacts protein S5. The interaction surface between S4 and S5 is involved in control of translational fidelity.

Its subcellular location is the plastid. It localises to the chloroplast. One of the primary rRNA binding proteins, it binds directly to 16S rRNA where it nucleates assembly of the body of the 30S subunit. Its function is as follows. With S5 and S12 plays an important role in translational accuracy. The chain is Small ribosomal subunit protein uS4c (rps4) from Cycas taitungensis (Prince sago).